Here is a 152-residue protein sequence, read N- to C-terminus: Transcriptional regulator MraZ (152 aa).

SpoVT-AbrB domains follow at residues 5 to 52 (AQAI…PLKE) and 81 to 124 (ATEC…SETE).

Belongs to the MraZ family. As to quaternary structure, forms oligomers.

The protein localises to the cytoplasm. It is found in the nucleoid. The chain is Transcriptional regulator MraZ from Mannheimia succiniciproducens (strain KCTC 0769BP / MBEL55E).